A 217-amino-acid polypeptide reads, in one-letter code: Pyridoxine/pyridoxamine 5'-phosphate oxidase (217 aa).

Substrate-binding positions include 13–16 (RREY) and lysine 71. Residues 66-71 (RIVLLK), 81-82 (YT), arginine 87, lysine 88, and glutamine 110 contribute to the FMN site. 3 residues coordinate substrate: tyrosine 128, arginine 132, and serine 136. Residues 145–146 (QS) and tryptophan 190 contribute to the FMN site. A substrate-binding site is contributed by 196-198 (RLH). Arginine 200 serves as a coordination point for FMN.

It belongs to the pyridoxamine 5'-phosphate oxidase family. Homodimer. FMN is required as a cofactor.

It carries out the reaction pyridoxamine 5'-phosphate + O2 + H2O = pyridoxal 5'-phosphate + H2O2 + NH4(+). The enzyme catalyses pyridoxine 5'-phosphate + O2 = pyridoxal 5'-phosphate + H2O2. The protein operates within cofactor metabolism; pyridoxal 5'-phosphate salvage; pyridoxal 5'-phosphate from pyridoxamine 5'-phosphate: step 1/1. It functions in the pathway cofactor metabolism; pyridoxal 5'-phosphate salvage; pyridoxal 5'-phosphate from pyridoxine 5'-phosphate: step 1/1. Functionally, catalyzes the oxidation of either pyridoxine 5'-phosphate (PNP) or pyridoxamine 5'-phosphate (PMP) into pyridoxal 5'-phosphate (PLP). The protein is Pyridoxine/pyridoxamine 5'-phosphate oxidase of Photorhabdus laumondii subsp. laumondii (strain DSM 15139 / CIP 105565 / TT01) (Photorhabdus luminescens subsp. laumondii).